Reading from the N-terminus, the 508-residue chain is Bifunctional purine biosynthesis protein PurH (508 aa).

An MGS-like domain is found at M1 to V145.

It belongs to the PurH family.

The catalysed reaction is (6R)-10-formyltetrahydrofolate + 5-amino-1-(5-phospho-beta-D-ribosyl)imidazole-4-carboxamide = 5-formamido-1-(5-phospho-D-ribosyl)imidazole-4-carboxamide + (6S)-5,6,7,8-tetrahydrofolate. It catalyses the reaction IMP + H2O = 5-formamido-1-(5-phospho-D-ribosyl)imidazole-4-carboxamide. It functions in the pathway purine metabolism; IMP biosynthesis via de novo pathway; 5-formamido-1-(5-phospho-D-ribosyl)imidazole-4-carboxamide from 5-amino-1-(5-phospho-D-ribosyl)imidazole-4-carboxamide (10-formyl THF route): step 1/1. Its pathway is purine metabolism; IMP biosynthesis via de novo pathway; IMP from 5-formamido-1-(5-phospho-D-ribosyl)imidazole-4-carboxamide: step 1/1. This is Bifunctional purine biosynthesis protein PurH from Lysinibacillus sphaericus (strain C3-41).